Consider the following 252-residue polypeptide: MTEPILQIRDLSVYYNQKKTLKDVSLDLYPNEITALIGPSGSGKSTLLRSINRMNDLNPEVTITGSIVYNGHNIYSPRTDTVDLRKEIGMVFQQPNPFPMSIYENVVYGLRLKGIRDKSILDHAVESSLKGASIWNEVKDRLHDSAVGLSGGQQQRVCIARVLATSPRIILLDEPTSALDPISAGKIEETLLLLKKDYTLAIVTRSMQQASRLSDRTGFFLEGDLLECGPTKAMFMNPKRKETEDYISGKFG.

An ABC transporter domain is found at 6–247 (LQIRDLSVYY…PKRKETEDYI (242 aa)). 38-45 (GPSGSGKS) lines the ATP pocket.

Belongs to the ABC transporter superfamily. Phosphate importer (TC 3.A.1.7) family. In terms of assembly, the complex is composed of two ATP-binding proteins (PstB), two transmembrane proteins (PstC and PstA) and a solute-binding protein (PstS).

Its subcellular location is the cell membrane. The enzyme catalyses phosphate(out) + ATP + H2O = ADP + 2 phosphate(in) + H(+). Part of the ABC transporter complex PstSACB involved in phosphate import. Responsible for energy coupling to the transport system. This Streptococcus pyogenes serotype M1 protein is Phosphate import ATP-binding protein PstB 1.